We begin with the raw amino-acid sequence, 141 residues long: HTH-type transcriptional regulator LrpA (141 aa).

The HTH asnC-type domain occupies 2-63 (VDERDKIILD…KINPKKLGYS (62 aa)). The H-T-H motif DNA-binding region spans 21–40 (FTEIAKILGISETAVRKRVK).

As to quaternary structure, homooctamer; tetramer of dimers.

DNA-binding protein that negatively regulates its own transcription. Interferes with RNA polymerase (RNAP) recruitment by inhibiting the association of RNAP with the TBP-TFB promoter complex. This is HTH-type transcriptional regulator LrpA (lrpA) from Pyrococcus abyssi (strain GE5 / Orsay).